The following is a 331-amino-acid chain: Heme A synthase (331 aa).

The next 8 membrane-spanning stretches (helical) occupy residues 6–26, 87–107, 124–144, 154–174, 193–213, 251–271, 279–299, and 301–321; these read VAIW…IGGF, YVHR…FIYF, ALLF…SGLV, LALH…QFFD, IWII…VAGL, VQFI…ILTI, LYVM…TLLL, and IPMA…GSGL. Residue H255 coordinates heme. Residue H309 coordinates heme.

The protein belongs to the COX15/CtaA family. Type 2 subfamily. In terms of assembly, interacts with CtaB. Requires heme b as cofactor.

It is found in the cell membrane. The catalysed reaction is Fe(II)-heme o + 2 A + H2O = Fe(II)-heme a + 2 AH2. The protein operates within porphyrin-containing compound metabolism; heme A biosynthesis; heme A from heme O: step 1/1. Functionally, catalyzes the conversion of heme O to heme A by two successive hydroxylations of the methyl group at C8. The first hydroxylation forms heme I, the second hydroxylation results in an unstable dihydroxymethyl group, which spontaneously dehydrates, resulting in the formyl group of heme A. The protein is Heme A synthase of Wolbachia pipientis subsp. Culex pipiens (strain wPip).